Reading from the N-terminus, the 1013-residue chain is Lysosomal alpha-mannosidase (1013 aa).

The signal sequence occupies residues 1 to 49 (MGTGPLTSGVRAGGGNTGWLWMSSCNLGSPVLPISFLFWLLLAAPGARA). 2 cysteine pairs are disulfide-bonded: Cys-55–Cys-358 and Cys-268–Cys-273. Residues His-72, Asp-74, and Asp-196 each contribute to the Zn(2+) site. The Nucleophile role is filled by Asp-196. 3 N-linked (GlcNAc...) asparagine glycosylation sites follow: Asn-310, Asn-345, and Asn-367. A disulfide bond links Cys-412 and Cys-472. His-446 serves as a coordination point for Zn(2+). Residues Asn-489, Asn-497, Asn-544, Asn-633, Asn-646, Asn-693, Asn-767, and Asn-931 are each glycosylated (N-linked (GlcNAc...) asparagine). A disulfide bridge connects residues Cys-493 and Cys-501.

It belongs to the glycosyl hydrolase 38 family. Zn(2+) is required as a cofactor.

Its subcellular location is the lysosome. The enzyme catalyses Hydrolysis of terminal, non-reducing alpha-D-mannose residues in alpha-D-mannosides.. Its function is as follows. Necessary for the catabolism of N-linked carbohydrates released during glycoprotein turnover. The chain is Lysosomal alpha-mannosidase (Man2b1) from Mus musculus (Mouse).